Reading from the N-terminus, the 147-residue chain is D-aminoacyl-tRNA deacylase (147 aa).

The Gly-cisPro motif, important for rejection of L-amino acids signature appears at 137–138 (GP).

This sequence belongs to the DTD family. As to quaternary structure, homodimer.

It is found in the cytoplasm. It catalyses the reaction glycyl-tRNA(Ala) + H2O = tRNA(Ala) + glycine + H(+). It carries out the reaction a D-aminoacyl-tRNA + H2O = a tRNA + a D-alpha-amino acid + H(+). Functionally, an aminoacyl-tRNA editing enzyme that deacylates mischarged D-aminoacyl-tRNAs. Also deacylates mischarged glycyl-tRNA(Ala), protecting cells against glycine mischarging by AlaRS. Acts via tRNA-based rather than protein-based catalysis; rejects L-amino acids rather than detecting D-amino acids in the active site. By recycling D-aminoacyl-tRNA to D-amino acids and free tRNA molecules, this enzyme counteracts the toxicity associated with the formation of D-aminoacyl-tRNA entities in vivo and helps enforce protein L-homochirality. The sequence is that of D-aminoacyl-tRNA deacylase from Exiguobacterium sp. (strain ATCC BAA-1283 / AT1b).